We begin with the raw amino-acid sequence, 194 residues long: Oligoribonuclease (194 aa).

Positions 11–174 (LIWIDLEMTG…SDVRDSIDEL (164 aa)) constitute an Exonuclease domain. Tyr132 is an active-site residue.

The protein belongs to the oligoribonuclease family.

It is found in the cytoplasm. In terms of biological role, 3'-to-5' exoribonuclease specific for small oligoribonucleotides. This chain is Oligoribonuclease, found in Xanthomonas axonopodis pv. citri (strain 306).